The primary structure comprises 1103 residues: PALM2-AKAP2 fusion protein (1103 aa).

Disordered stretches follow at residues 178 to 197 and 304 to 396; these read ESASNATETSGPDMTIKKPP and YNGT…SSRD. Polar residues predominate over residues 179–189; that stretch reads SASNATETSGP. Phosphoserine occurs at positions 322, 352, and 383. The segment covering 380–392 has biased composition (low complexity); it reads VPVSPSSTTSSRC. Lys405 participates in a covalent cross-link: Glycyl lysine isopeptide (Lys-Gly) (interchain with G-Cter in SUMO1); alternate. Residue Lys405 forms a Glycyl lysine isopeptide (Lys-Gly) (interchain with G-Cter in SUMO2); alternate linkage. Residues 444-521 adopt a coiled-coil conformation; that stretch reads EEMLELEKER…QKQLQQQQQQ (78 aa). Disordered regions lie at residues 483-544 and 566-662; these read EQLD…DKAK and NSRQ…SKLW. A compositionally biased stretch (basic and acidic residues) spans 490 to 505; that stretch reads LESHKKYKERKERRAQ. The span at 506 to 521 shows a compositional bias: low complexity; that stretch reads QEQLLLQKQLQQQQQQ. Residues 522-531 show a composition bias toward polar residues; sequence PPSQLCTAPA. The segment covering 533-544 has biased composition (basic and acidic residues); that stretch reads SHERASMIDKAK. The span at 566 to 579 shows a compositional bias: polar residues; it reads NSRQAVAKGQSTPR. A phosphoserine mark is found at Ser567 and Ser624. Residues 633 to 643 are compositionally biased toward polar residues; sequence AAGSQGNTASQ. Phosphoserine occurs at positions 692, 696, and 748. The span at 745 to 763 shows a compositional bias: polar residues; sequence QENSLADFSLPQTPQTDNP. Residues 745–794 form a disordered region; sequence QENSLADFSLPQTPQTDNPSEGRGEGVSKSFSDHGFYSPSSTLGDSPLVD. Residue Thr757 is modified to Phosphothreonine. Positions 797-810 are PKA-RII subunit binding domain; it reads LEYQAGLLVQNAIQ. The segment covering 817-829 has biased composition (basic and acidic residues); sequence VDKAVSKTSRDGA. The segment at 817–907 is disordered; sequence VDKAVSKTSR…GPINMEETRP (91 aa). Ser862 bears the Phosphoserine mark. Over residues 865-886 the composition is skewed to basic and acidic residues; sequence QEKRDVLPKILPAEDRALRERG. Residues 941-979 adopt a coiled-coil conformation; that stretch reads KLRSRKQRTLSMIEEEIRAAQEREEELKRQRQVLQSTQS. Phosphoserine is present on residues Ser951, Ser979, Ser1009, and Ser1016. The tract at residues 962–1035 is disordered; that stretch reads EREEELKRQR…AAGTQRPKNL (74 aa). A compositionally biased stretch (polar residues) spans 976–990; the sequence is STQSPRTKNAPSLPS.

Expressed in infantile heart and muscle, and fibroblasts.

The protein localises to the apical cell membrane. Functionally, binds to regulatory subunit (RII) of protein kinase A. May be involved in establishing polarity in signaling systems or in integrating PKA-RII isoforms with downstream effectors to capture, amplify and focus diffuse, trans-cellular signals carried by cAMP. Binds to and modulates the structure of the actin cytoskeleton. This is PALM2-AKAP2 fusion protein from Homo sapiens (Human).